The sequence spans 117 residues: Membrane-anchored ubiquitin-fold protein 1 (117 aa).

Residues 8–74 enclose the Ubiquitin-like domain; sequence LEIKFRLTDG…LENSKTVKDY (67 aa). Residue C112 is the site of S-palmitoyl cysteine attachment. C114 is subject to Cysteine methyl ester. A lipid anchor (S-farnesyl cysteine) is attached at C114. A propeptide spans 115–117 (removed in mature form); the sequence is SVM.

It is found in the cell membrane. Functionally, may serve as docking site to facilitate the association of other proteins to the plasma membrane. The sequence is that of Membrane-anchored ubiquitin-fold protein 1 (MUB1) from Arabidopsis thaliana (Mouse-ear cress).